We begin with the raw amino-acid sequence, 916 residues long: DNA repair endonuclease XPF (916 aa).

The segment at 1–457 (MESGQPARRI…EVWMKFRKED (457 aa)) is helicase-like. Leucine-zipper stretches follow at residues 233-254 (LNACLKELKCHNPSLEVEDLSL) and 270-298 (LDPLWHQLGAKTKSLVQDLKILRTLLQYL). N6-acetyllysine is present on Lys-289. The interval 460–487 (KRIRKSHKRPKDPQNKERASTKERTLKK) is disordered. A compositionally biased stretch (basic and acidic residues) spans 470-483 (KDPQNKERASTKER). Residues 486–491 (KKKKRK) carry the Nuclear localization signal motif. Lys-500 participates in a covalent cross-link: Glycyl lysine isopeptide (Lys-Gly) (interchain with G-Cter in SUMO2). 2 disordered regions span residues 502–526 (EELEEEGDVEEGYRREISSSPESCP) and 660–679 (TASADVSTDTRKAGGQEQNG). Position 521 is a phosphoserine (Ser-521). Residues 658–813 (RGTASADVST…PSPHATAELF (156 aa)) are nuclease. The ERCC4 domain occupies 683-763 (SIVVDMREFR…RPVLLIEFDP (81 aa)). Position 764 is a phosphoserine (Ser-764). The interval 837–905 (TLPESEKYNP…QLYDFIHTSF (69 aa)) is hhH2, dimerization with ERCC1. The residue at position 911 (Lys-911) is an N6-acetyllysine.

It belongs to the XPF family. In terms of assembly, heterodimer composed of ERCC1 and ERCC4/XPF. Interacts with SLX4/BTBD12; this interaction is direct and links the ERCC1-ERCC4/XPF complex to SLX4, which may coordinate the action of the structure-specific endonuclease during DNA repair. It depends on Mg(2+) as a cofactor. Acetylation at Lys-911 by KAT5 promotes interaction with ERCC1 by disrupting a salt bridge between Glu-907 and Lys-911, thereby exposing a second binding site for ERCC1. Deacetylated by SIRT1.

It localises to the nucleus. The protein resides in the chromosome. In terms of biological role, catalytic component of a structure-specific DNA repair endonuclease responsible for the 5-prime incision during DNA repair, and which is essential for nucleotide excision repair (NER) and interstrand cross-link (ICL) repair. This Homo sapiens (Human) protein is DNA repair endonuclease XPF.